Reading from the N-terminus, the 415-residue chain is ATP-dependent RNA helicase RhlB (415 aa).

The Q motif signature appears at Q9–A37. Positions L40–I218 constitute a Helicase ATP-binding domain. A53 to T60 lines the ATP pocket. Positions D164–D167 match the DEAD box motif. The Helicase C-terminal domain occupies D241–L389.

Belongs to the DEAD box helicase family. RhlB subfamily. As to quaternary structure, component of the RNA degradosome, which is a multiprotein complex involved in RNA processing and mRNA degradation.

The protein localises to the cytoplasm. The enzyme catalyses ATP + H2O = ADP + phosphate + H(+). Its function is as follows. DEAD-box RNA helicase involved in RNA degradation. Has RNA-dependent ATPase activity and unwinds double-stranded RNA. This Haemophilus influenzae (strain PittEE) protein is ATP-dependent RNA helicase RhlB.